A 208-amino-acid chain; its full sequence is Small ribosomal subunit protein uS5 (208 aa).

The span at 1-19 (MTDSNNQSPNKKTSGSSGA) shows a compositional bias: polar residues. The segment at 1–54 (MTDSNNQSPNKKTSGSSGAPTAADGRQENRRSRGEKRGGRRDRRGQERDSEWQE) is disordered. 2 stretches are compositionally biased toward basic and acidic residues: residues 25 to 37 (GRQE…GEKR) and 44 to 54 (RGQERDSEWQE). Residues 52–115 (WQERVVQIRR…ADGKKHLVRV (64 aa)) form the S5 DRBM domain.

This sequence belongs to the universal ribosomal protein uS5 family. In terms of assembly, part of the 30S ribosomal subunit. Contacts proteins S4 and S8.

Functionally, with S4 and S12 plays an important role in translational accuracy. In terms of biological role, located at the back of the 30S subunit body where it stabilizes the conformation of the head with respect to the body. This is Small ribosomal subunit protein uS5 from Prochlorococcus marinus (strain NATL1A).